The following is a 1295-amino-acid chain: Phosphoribosylformylglycinamidine synthase (1295 aa).

Positions 302–327 (SPWPGASTGSGGEIRDEGATGRGAKP) are disordered. ATP-binding positions include 306–317 (GASTGSGGEIRD) and alanine 677. The Mg(2+) site is built by aspartate 678, glutamate 717, asparagine 721, and aspartate 884. Serine 886 is an ATP binding site. Residues 1042–1295 (VAVLREQGVN…IFRNARKQLG (254 aa)) form the Glutamine amidotransferase type-1 domain. The Nucleophile role is filled by cysteine 1135. Active-site residues include histidine 1260 and glutamate 1262.

The protein in the N-terminal section; belongs to the FGAMS family. As to quaternary structure, monomer.

Its subcellular location is the cytoplasm. The catalysed reaction is N(2)-formyl-N(1)-(5-phospho-beta-D-ribosyl)glycinamide + L-glutamine + ATP + H2O = 2-formamido-N(1)-(5-O-phospho-beta-D-ribosyl)acetamidine + L-glutamate + ADP + phosphate + H(+). The protein operates within purine metabolism; IMP biosynthesis via de novo pathway; 5-amino-1-(5-phospho-D-ribosyl)imidazole from N(2)-formyl-N(1)-(5-phospho-D-ribosyl)glycinamide: step 1/2. Phosphoribosylformylglycinamidine synthase involved in the purines biosynthetic pathway. Catalyzes the ATP-dependent conversion of formylglycinamide ribonucleotide (FGAR) and glutamine to yield formylglycinamidine ribonucleotide (FGAM) and glutamate. This chain is Phosphoribosylformylglycinamidine synthase, found in Photorhabdus laumondii subsp. laumondii (strain DSM 15139 / CIP 105565 / TT01) (Photorhabdus luminescens subsp. laumondii).